The chain runs to 508 residues: Photosystem II CP47 reaction center protein (508 aa).

The next 6 helical transmembrane spans lie at S21–S36, I101–W115, G140–F156, I203–S218, V237–V252, and S457–R472.

Belongs to the PsbB/PsbC family. PsbB subfamily. As to quaternary structure, PSII is composed of 1 copy each of membrane proteins PsbA, PsbB, PsbC, PsbD, PsbE, PsbF, PsbH, PsbI, PsbJ, PsbK, PsbL, PsbM, PsbT, PsbX, PsbY, PsbZ, Psb30/Ycf12, at least 3 peripheral proteins of the oxygen-evolving complex and a large number of cofactors. It forms dimeric complexes. It depends on Binds multiple chlorophylls. PSII binds additional chlorophylls, carotenoids and specific lipids. as a cofactor.

It localises to the plastid. Its subcellular location is the chloroplast thylakoid membrane. Functionally, one of the components of the core complex of photosystem II (PSII). It binds chlorophyll and helps catalyze the primary light-induced photochemical processes of PSII. PSII is a light-driven water:plastoquinone oxidoreductase, using light energy to abstract electrons from H(2)O, generating O(2) and a proton gradient subsequently used for ATP formation. The chain is Photosystem II CP47 reaction center protein from Aethionema cordifolium (Lebanon stonecress).